A 367-amino-acid polypeptide reads, in one-letter code: 5-amino-6-(D-ribitylamino)uracil--L-tyrosine 4-hydroxyphenyl transferase (367 aa).

In terms of domain architecture, Radical SAM core spans 54-288 (ITYIENWNIN…VYAISRLMFR (235 aa)). Residues cysteine 68, cysteine 72, and cysteine 75 each contribute to the [4Fe-4S] cluster site.

Belongs to the radical SAM superfamily. CofH family. Consists of two subunits, CofG and CofH. Requires [4Fe-4S] cluster as cofactor.

It catalyses the reaction 5-amino-6-(D-ribitylamino)uracil + L-tyrosine + S-adenosyl-L-methionine = 5-amino-5-(4-hydroxybenzyl)-6-(D-ribitylimino)-5,6-dihydrouracil + 2-iminoacetate + 5'-deoxyadenosine + L-methionine + H(+). The protein operates within cofactor biosynthesis; coenzyme F0 biosynthesis. Its function is as follows. Catalyzes the radical-mediated synthesis of 5-amino-5-(4-hydroxybenzyl)-6-(D-ribitylimino)-5,6-dihydrouracil from 5-amino-6-(D-ribitylamino)uracil and L-tyrosine. The chain is 5-amino-6-(D-ribitylamino)uracil--L-tyrosine 4-hydroxyphenyl transferase from Methanothermobacter thermautotrophicus (strain ATCC 29096 / DSM 1053 / JCM 10044 / NBRC 100330 / Delta H) (Methanobacterium thermoautotrophicum).